Here is a 990-residue protein sequence, read N- to C-terminus: Aconitate hydratase 3, mitochondrial (990 aa).

Residues 1 to 78 (MYLTASSSAS…PFRFTSQIRA (78 aa)) constitute a mitochondrion transit peptide. Ser91 carries the post-translational modification Phosphoserine. Substrate contacts are provided by residues Gln182 and 301–303 (DSH). [4Fe-4S] cluster is bound by residues Cys533, Cys599, and Cys602. Substrate-binding positions include Arg632, Arg637, Arg795, and 876–877 (SR).

Belongs to the aconitase/IPM isomerase family. In terms of assembly, monomer. Interacts with B'GAMMA in the cytosol. The cofactor is [4Fe-4S] cluster. In terms of processing, phosphorylated at Ser-91 in the cytoplasm; this phosphorylation requires the presence of B'GAMMA. In terms of tissue distribution, major aconitase isoenzyme in young seedlings. Expressed in roots, leaves, stems and flowers, and, at low levels, in seeds.

It is found in the mitochondrion. It localises to the cytoplasm. The enzyme catalyses citrate = D-threo-isocitrate. Its pathway is carbohydrate metabolism; tricarboxylic acid cycle; isocitrate from oxaloacetate: step 2/2. Its function is as follows. Catalyzes the isomerization of citrate to isocitrate via cis-aconitate. Contributes to oxidative stress tolerance. Modulates cytosolic citrate metabolism during lipid mobilization. Required during seedling growth. In Arabidopsis thaliana (Mouse-ear cress), this protein is Aconitate hydratase 3, mitochondrial.